The following is a 489-amino-acid chain: Ribulose bisphosphate carboxylase large chain (489 aa).

Substrate-binding residues include asparagine 128 and threonine 178. Lysine 180 acts as the Proton acceptor in catalysis. Lysine 182 lines the substrate pocket. Residues lysine 206, aspartate 208, and glutamate 209 each contribute to the Mg(2+) site. Lysine 206 bears the N6-carboxylysine mark. The active-site Proton acceptor is histidine 298. The substrate site is built by arginine 299, histidine 331, and serine 383.

It belongs to the RuBisCO large chain family. Type I subfamily. As to quaternary structure, heterohexadecamer of 8 large chains and 8 small chains. Requires Mg(2+) as cofactor.

It catalyses the reaction 2 (2R)-3-phosphoglycerate + 2 H(+) = D-ribulose 1,5-bisphosphate + CO2 + H2O. It carries out the reaction D-ribulose 1,5-bisphosphate + O2 = 2-phosphoglycolate + (2R)-3-phosphoglycerate + 2 H(+). In terms of biological role, ruBisCO catalyzes two reactions: the carboxylation of D-ribulose 1,5-bisphosphate, the primary event in carbon dioxide fixation, as well as the oxidative fragmentation of the pentose substrate. Both reactions occur simultaneously and in competition at the same active site. This is Ribulose bisphosphate carboxylase large chain from Nitrosospira multiformis (strain ATCC 25196 / NCIMB 11849 / C 71).